Consider the following 25-residue polypeptide: Nicotinic acetylcholine receptor-binding protein Mnn-4 (25 aa).

Cys3 and Cys20 are disulfide-bonded.

Belongs to the three-finger toxin family. Short-chain subfamily. In terms of tissue distribution, expressed by the venom gland.

It localises to the secreted. Its function is as follows. Binds and may inhibit nicotinic acetylcholine receptors (nAChR). In Micrurus nigrocinctus (Central American coral snake), this protein is Nicotinic acetylcholine receptor-binding protein Mnn-4.